A 319-amino-acid polypeptide reads, in one-letter code: 2-dehydropantoate 2-reductase (319 aa).

Residues 10–15 (GTGALG) and Asn-105 each bind NADP(+). Position 105 (Asn-105) interacts with substrate. The active-site Proton donor is Lys-192. Positions 196, 200, and 262 each coordinate substrate. An NADP(+)-binding site is contributed by Glu-274.

This sequence belongs to the ketopantoate reductase family.

It is found in the cytoplasm. The enzyme catalyses (R)-pantoate + NADP(+) = 2-dehydropantoate + NADPH + H(+). The protein operates within cofactor biosynthesis; (R)-pantothenate biosynthesis; (R)-pantoate from 3-methyl-2-oxobutanoate: step 2/2. Catalyzes the NADPH-dependent reduction of ketopantoate into pantoic acid. The sequence is that of 2-dehydropantoate 2-reductase from Nostoc sp. (strain PCC 7120 / SAG 25.82 / UTEX 2576).